Reading from the N-terminus, the 129-residue chain is Small ribosomal subunit protein uS11 (129 aa).

It belongs to the universal ribosomal protein uS11 family. As to quaternary structure, part of the 30S ribosomal subunit. Interacts with proteins S7 and S18. Binds to IF-3.

Its function is as follows. Located on the platform of the 30S subunit, it bridges several disparate RNA helices of the 16S rRNA. Forms part of the Shine-Dalgarno cleft in the 70S ribosome. The polypeptide is Small ribosomal subunit protein uS11 (Pseudomonas entomophila (strain L48)).